A 253-amino-acid polypeptide reads, in one-letter code: 1-(5-phosphoribosyl)-5-[(5-phosphoribosylamino)methylideneamino] imidazole-4-carboxamide isomerase (253 aa).

Asp11 serves as the catalytic Proton acceptor. Catalysis depends on Asp132, which acts as the Proton donor.

Belongs to the HisA/HisF family.

The protein resides in the cytoplasm. It carries out the reaction 1-(5-phospho-beta-D-ribosyl)-5-[(5-phospho-beta-D-ribosylamino)methylideneamino]imidazole-4-carboxamide = 5-[(5-phospho-1-deoxy-D-ribulos-1-ylimino)methylamino]-1-(5-phospho-beta-D-ribosyl)imidazole-4-carboxamide. It participates in amino-acid biosynthesis; L-histidine biosynthesis; L-histidine from 5-phospho-alpha-D-ribose 1-diphosphate: step 4/9. The polypeptide is 1-(5-phosphoribosyl)-5-[(5-phosphoribosylamino)methylideneamino] imidazole-4-carboxamide isomerase (Methylobacterium nodulans (strain LMG 21967 / CNCM I-2342 / ORS 2060)).